The sequence spans 160 residues: Calcium and integrin-binding family member 3 (160 aa).

EF-hand domains are found at residues 39–74 (KDNP…MSEM), 76–111 (PRDL…LTRG), and 117–152 (EVTL…APDF). Ca(2+) contacts are provided by aspartate 89, asparagine 91, aspartate 93, tyrosine 95, aspartate 100, aspartate 130, aspartate 132, aspartate 134, arginine 136, and aspartate 141.

In terms of assembly, monomer and homodimer. Interacts with ITGA2B (via C-terminus cytoplasmic tail region); the interaction is stabilized/increased in a calcium and magnesium-dependent manner. Interacts with TMC1. Expressed in heart, liver and inner ear. In the inner ear, expressed in vestibule and basilar membrane cells. Expressed in megakaryocytes and endothelial cells.

Its function is as follows. Acts as an auxiliary subunit of the sensory mechanoelectrical transduction (MET) channel in hair cells. Plays a role in regulating hair cell MET channel localization and function. In Mus musculus (Mouse), this protein is Calcium and integrin-binding family member 3 (Cib3).